The primary structure comprises 612 residues: uncharacterized protein (612 aa).

The next 6 helical transmembrane spans lie at 13–33 (IPLTLAVIVFALVMFVLEWLP), 38–58 (AILVAVILMVLGLVTPTEGIA), 67–87 (TIMAMFILSYGITRTGIIQII), 107–127 (GFIVGPSSAFLNNTAIVAIFL), 144–164 (LLIPLSYATILGGMITLLGTS), and 189–209 (LGLLTFSVGLIYIVLAAPILL). RCK C-terminal domains are found at residues 218-302 (GNVA…ERGI) and 316-403 (NNAG…LLVL). The next 6 helical transmembrane spans lie at 419–439 (AIAIVALVIVIAGLDILPISV), 459–479 (IYGAIRWDVIFLLAGLIPLGT), 501–521 (LSGYALLLLFYLATALLTEIL), 525–545 (ATVVLMLPIAFQVAQSLGLNP), 546–566 (LAFMFVVTFAASNSFMSPIGY), and 586–606 (IGAPLTVILTLATPLLVMLIY).

The protein belongs to the SLC13A/DASS transporter (TC 2.A.47) family. NADC subfamily.

It is found in the cell membrane. This is an uncharacterized protein from Synechocystis sp. (strain ATCC 27184 / PCC 6803 / Kazusa).